Here is a 378-residue protein sequence, read N- to C-terminus: Quinolinate synthase (378 aa).

Positions 59 and 80 each coordinate iminosuccinate. [4Fe-4S] cluster is bound at residue Cys-125. Residues 151 to 153 and Ser-168 contribute to the iminosuccinate site; that span reads YAN. [4Fe-4S] cluster is bound at residue Cys-212. Iminosuccinate contacts are provided by residues 238-240 and Thr-255; that span reads HPE. Cys-309 lines the [4Fe-4S] cluster pocket.

Belongs to the quinolinate synthase family. Type 1 subfamily. Requires [4Fe-4S] cluster as cofactor.

The protein resides in the cytoplasm. The catalysed reaction is iminosuccinate + dihydroxyacetone phosphate = quinolinate + phosphate + 2 H2O + H(+). The protein operates within cofactor biosynthesis; NAD(+) biosynthesis; quinolinate from iminoaspartate: step 1/1. In terms of biological role, catalyzes the condensation of iminoaspartate with dihydroxyacetone phosphate to form quinolinate. This Burkholderia lata (strain ATCC 17760 / DSM 23089 / LMG 22485 / NCIMB 9086 / R18194 / 383) protein is Quinolinate synthase.